A 573-amino-acid chain; its full sequence is Vacuolar protein 8 (573 aa).

The interval 1–36 (MAASAADRMGRQRMSGLSCSAPPRPTVVTNPGNKQD) is disordered. The segment covering 27–36 (VVTNPGNKQD) has biased composition (polar residues). ARM repeat units lie at residues 60 to 97 (NRGE…FAEI), 98 to 137 (TEKD…NLAV), 139 to 178 (NENK…NLAT), 180 to 219 (EANK…NMTH), 221 to 260 (DQNR…NIAV), 264 to 303 (NRKK…NLAS), 305 to 344 (SDYQ…NISI), 346 to 386 (PLNE…NLAA), and 430 to 469 (DELK…NLSS).

This sequence belongs to the beta-catenin family.

It localises to the vacuole membrane. Functions in both vacuole inheritance and protein targeting from the cytoplasm to vacuole. The polypeptide is Vacuolar protein 8 (VAC8) (Yarrowia lipolytica (strain CLIB 122 / E 150) (Yeast)).